Here is a 478-residue protein sequence, read N- to C-terminus: Zinc finger protein 410 (478 aa).

Positions 187-213 are disordered; sequence NAKTSSNGENVHLGSGDGQSKDSGPLP. 5 consecutive C2H2-type zinc fingers follow at residues 219-243, 249-273, 279-303, 309-333, and 339-362; these read LKCT…LKTH, FICP…MRTH, FMCH…RRIH, FLCE…LVVH, and HQCQ…RKHH. Zn(2+)-binding residues include C221, C226, H239, H243, C251, C256, H269, H273, C281, C286, H299, H303, C311, C316, H329, H333, C341, C344, H357, and H361.

Interacts with CDKN2A/p14ARF. Post-translationally, sumoylated. Sumoylation increases its half-life, possibly by blocking ubiquitin-mediated degradation. O-glycosylated. O-GlcNAcylation may occur in response to increasing glucose levels and affect transcription factor activity. As to expression, widely expressed.

It localises to the nucleus. It is found in the chromosome. Its function is as follows. Transcription factor that binds to the sequence motif 5'-CATCCCATAATA-3', and is specifically required to silence expression of fetal hemoglobin in adult erythroid cells. Prevents expression of fetal hemoglobin genes HBG1 and HBG2 through CHD4: acts as a direct transcriptional activator of CHD4, a central component of the NuRD complex that represses transcription of fetal hemoglobin genes HBG1 and HBG2 in erythroid cells. May also activate transcription of matrix-remodeling genes such as MMP1 during fibroblast senescence. May activate transcription of the gap junction gene GJC1, perhaps in response to increasing glucose. However, recent studies suggest that ZNF410 is dedicated to regulate expression of a single gene: CHD4. The polypeptide is Zinc finger protein 410 (Homo sapiens (Human)).